A 201-amino-acid polypeptide reads, in one-letter code: Imidazole glycerol phosphate synthase subunit HisH (201 aa).

The region spanning M1–F201 is the Glutamine amidotransferase type-1 domain. Catalysis depends on C79, which acts as the Nucleophile. Active-site residues include H183 and E185.

In terms of assembly, heterodimer of HisH and HisF.

Its subcellular location is the cytoplasm. It catalyses the reaction 5-[(5-phospho-1-deoxy-D-ribulos-1-ylimino)methylamino]-1-(5-phospho-beta-D-ribosyl)imidazole-4-carboxamide + L-glutamine = D-erythro-1-(imidazol-4-yl)glycerol 3-phosphate + 5-amino-1-(5-phospho-beta-D-ribosyl)imidazole-4-carboxamide + L-glutamate + H(+). The catalysed reaction is L-glutamine + H2O = L-glutamate + NH4(+). Its pathway is amino-acid biosynthesis; L-histidine biosynthesis; L-histidine from 5-phospho-alpha-D-ribose 1-diphosphate: step 5/9. In terms of biological role, IGPS catalyzes the conversion of PRFAR and glutamine to IGP, AICAR and glutamate. The HisH subunit catalyzes the hydrolysis of glutamine to glutamate and ammonia as part of the synthesis of IGP and AICAR. The resulting ammonia molecule is channeled to the active site of HisF. The protein is Imidazole glycerol phosphate synthase subunit HisH of Chlorobaculum tepidum (strain ATCC 49652 / DSM 12025 / NBRC 103806 / TLS) (Chlorobium tepidum).